A 254-amino-acid polypeptide reads, in one-letter code: tRNA pseudouridine synthase A (254 aa).

Catalysis depends on D52, which acts as the Nucleophile. Y110 is a binding site for substrate.

This sequence belongs to the tRNA pseudouridine synthase TruA family. Homodimer.

The enzyme catalyses uridine(38/39/40) in tRNA = pseudouridine(38/39/40) in tRNA. Formation of pseudouridine at positions 38, 39 and 40 in the anticodon stem and loop of transfer RNAs. The chain is tRNA pseudouridine synthase A from Thermodesulfovibrio yellowstonii (strain ATCC 51303 / DSM 11347 / YP87).